The primary structure comprises 342 residues: Renalase (342 aa).

Residues 1-17 form the signal peptide; the sequence is MAQVLIVGAGMTGSLCA. FAD is bound by residues Thr-12, Arg-42, and 61–62; that span reads QY.

It belongs to the renalase family. It depends on FAD as a cofactor. In terms of tissue distribution, secreted into the blood by the kidney. Highly expressed in the kidney, expressed at lower level in heart, skeletal muscle and small intestine. Its plasma concentration is markedly reduced in patients with end-stage renal disease, as compared with healthy subjects.

Its subcellular location is the secreted. The catalysed reaction is 1,2-dihydro-beta-NAD + O2 + H(+) = H2O2 + NAD(+). It carries out the reaction 1,2-dihydro-beta-NADP + O2 + H(+) = H2O2 + NADP(+). It catalyses the reaction 1,6-dihydro-beta-NADP + O2 + H(+) = H2O2 + NADP(+). The enzyme catalyses 1,6-dihydro-beta-NAD + O2 + H(+) = H2O2 + NAD(+). Catalyzes the oxidation of the less abundant 1,2-dihydro-beta-NAD(P) and 1,6-dihydro-beta-NAD(P) to form beta-NAD(P)(+). The enzyme hormone is secreted by the kidney, and circulates in blood and modulates cardiac function and systemic blood pressure. Lowers blood pressure in vivo by decreasing cardiac contractility and heart rate and preventing a compensatory increase in peripheral vascular tone, suggesting a causal link to the increased plasma catecholamine and heightened cardiovascular risk. High concentrations of catecholamines activate plasma renalase and promotes its secretion and synthesis. The polypeptide is Renalase (RNLS) (Homo sapiens (Human)).